A 102-amino-acid polypeptide reads, in one-letter code: Large ribosomal subunit protein bL21 (102 aa).

The protein belongs to the bacterial ribosomal protein bL21 family. As to quaternary structure, part of the 50S ribosomal subunit. Contacts protein L20.

This protein binds to 23S rRNA in the presence of protein L20. In Campylobacter lari (strain RM2100 / D67 / ATCC BAA-1060), this protein is Large ribosomal subunit protein bL21.